Here is a 138-residue protein sequence, read N- to C-terminus: Phosphoribosyl-AMP cyclohydrolase (138 aa).

Residue D84 coordinates Mg(2+). A Zn(2+)-binding site is contributed by C85. Mg(2+) is bound by residues D86 and D88. The Zn(2+) site is built by C102 and C109.

This sequence belongs to the PRA-CH family. In terms of assembly, homodimer. It depends on Mg(2+) as a cofactor. Requires Zn(2+) as cofactor.

Its subcellular location is the cytoplasm. The catalysed reaction is 1-(5-phospho-beta-D-ribosyl)-5'-AMP + H2O = 1-(5-phospho-beta-D-ribosyl)-5-[(5-phospho-beta-D-ribosylamino)methylideneamino]imidazole-4-carboxamide. The protein operates within amino-acid biosynthesis; L-histidine biosynthesis; L-histidine from 5-phospho-alpha-D-ribose 1-diphosphate: step 3/9. Its function is as follows. Catalyzes the hydrolysis of the adenine ring of phosphoribosyl-AMP. This Burkholderia cenocepacia (strain ATCC BAA-245 / DSM 16553 / LMG 16656 / NCTC 13227 / J2315 / CF5610) (Burkholderia cepacia (strain J2315)) protein is Phosphoribosyl-AMP cyclohydrolase.